A 383-amino-acid chain; its full sequence is L-Ala-D/L-Glu epimerase (383 aa).

Substrate contacts are provided by residues R68, Y94, and 198–200; that span reads KVK. The Mg(2+) site is built by D224, E251, and D276. Substrate is bound by residues K298, 326–328, and 348–350; these read CMT and DLD.

Belongs to the mandelate racemase/muconate lactonizing enzyme family. It depends on Mg(2+) as a cofactor.

It carries out the reaction L-alanyl-L-glutamate = L-alanyl-D-glutamate. Functionally, catalyzes the epimerization of L-Ala-D-Glu to L-Ala-L-Glu and may play a role in the metabolism of the murein peptide, of which L-Ala-D-Glu is a component. Is also able to catalyze the epimerization of L-Ala-D-Asp, L-Ala-L-Glu, L-Ala-L-Ser, L-Ala-L-Pro, L-Ala-L-L-Val, L-Ala-L-Thr, L-Ala-L-Leu, L-Ala-L-Ile and L-Gly-L-Glu (in vitro). This chain is L-Ala-D/L-Glu epimerase, found in Bacteroides thetaiotaomicron (strain ATCC 29148 / DSM 2079 / JCM 5827 / CCUG 10774 / NCTC 10582 / VPI-5482 / E50).